Reading from the N-terminus, the 243-residue chain is Pyridoxine 5'-phosphate synthase (243 aa).

A 3-amino-2-oxopropyl phosphate-binding site is contributed by Asn-9. Asp-11–His-12 serves as a coordination point for 1-deoxy-D-xylulose 5-phosphate. A 3-amino-2-oxopropyl phosphate-binding site is contributed by Arg-20. The Proton acceptor role is filled by His-45. Residues Arg-47 and His-52 each coordinate 1-deoxy-D-xylulose 5-phosphate. The active-site Proton acceptor is the Glu-72. Position 102 (Thr-102) interacts with 1-deoxy-D-xylulose 5-phosphate. Catalysis depends on His-193, which acts as the Proton donor. Residues Gly-194 and Gly-215 to His-216 each bind 3-amino-2-oxopropyl phosphate.

It belongs to the PNP synthase family. Homooctamer; tetramer of dimers.

It is found in the cytoplasm. It catalyses the reaction 3-amino-2-oxopropyl phosphate + 1-deoxy-D-xylulose 5-phosphate = pyridoxine 5'-phosphate + phosphate + 2 H2O + H(+). The protein operates within cofactor biosynthesis; pyridoxine 5'-phosphate biosynthesis; pyridoxine 5'-phosphate from D-erythrose 4-phosphate: step 5/5. Functionally, catalyzes the complicated ring closure reaction between the two acyclic compounds 1-deoxy-D-xylulose-5-phosphate (DXP) and 3-amino-2-oxopropyl phosphate (1-amino-acetone-3-phosphate or AAP) to form pyridoxine 5'-phosphate (PNP) and inorganic phosphate. This Shigella sonnei (strain Ss046) protein is Pyridoxine 5'-phosphate synthase.